Consider the following 1087-residue polypeptide: Apoptosis-stimulating of p53 protein 1 (1087 aa).

The tract at residues 82-122 (HEDSPTESSEQGARQTQEQRTQRSVVNVPGEKRTENGVGNP) is disordered. Polar residues predominate over residues 87–106 (TESSEQGARQTQEQRTQRSV). 2 positions are modified to phosphoserine: Ser-332 and Ser-335. 3 disordered regions span residues 374–415 (SSAA…GMEG), 442–721 (IGKG…PNIQ), and 734–878 (GMEG…TGHG). The span at 393-405 (KQNSASVKSTQMT) shows a compositional bias: polar residues. Pro residues predominate over residues 445–458 (GPPPIPGVGKPLPP). A compositionally biased stretch (low complexity) spans 459–476 (SYGTYPSSGPLGPGSTSS). The span at 506–520 (NAPQPGSSQQIQQRI) shows a compositional bias: polar residues. Residues 523–536 (PPSPTYPPAGPPAF) show a composition bias toward pro residues. Arg-552 is modified (asymmetric dimethylarginine). A compositionally biased stretch (polar residues) spans 570 to 589 (QTVNSSSIYSMYLQQATPPK). The segment covering 610–625 (PVLPSGSASPSPLPFL) has biased composition (low complexity). Residues Ser-679 and Ser-708 each carry the phosphoserine modification. Polar residues predominate over residues 805–831 (PQTTHQTAEPTEDNNNNVAPVPSTEQI). 2 ANK repeats span residues 917-949 (EGITPLHNAVCAGHHHIVKFLLDFGVNVNAADS) and 950-982 (DGWTPLHCAASCNSVHLCKQLVESGAAIFASTI). Positions 1016–1078 (MNKGTVYALW…PKNLLGLYPR (63 aa)) constitute an SH3 domain.

It belongs to the ASPP family. As to quaternary structure, interacts with P53/TP53; the interaction promotes pro-apoptotic activity.

It is found in the cytoplasm. Its subcellular location is the nucleus. Regulator that plays a central role in regulation of apoptosis via its interaction with p53/TP53. Regulates TP53 by enhancing the DNA binding and transactivation function of TP53 on the promoters of proapoptotic genes in vivo. The sequence is that of Apoptosis-stimulating of p53 protein 1 (Ppp1r13b) from Mus musculus (Mouse).